The chain runs to 663 residues: Bifunctional polymyxin resistance protein ArnA (663 aa).

Residues 1-307 (MSSKAVVFAY…ELGLVDGSVL (307 aa)) form a formyltransferase ArnAFT region. Residue H106 is the Proton donor; for formyltransferase activity of the active site. Residues R116 and 138-142 (VKRAD) each bind (6R)-10-formyltetrahydrofolate. The interval 317–663 (RRTRVLILGV…EAMLEIADKK (347 aa)) is dehydrogenase ArnADH. NAD(+) contacts are provided by residues D350 and 371–372 (DI). UDP-alpha-D-glucuronate contacts are provided by residues A396, Y401, and 435 to 436 (TS). Residue E437 is the Proton acceptor; for decarboxylase activity of the active site. UDP-alpha-D-glucuronate contacts are provided by residues R463, N494, 528 to 537 (RLFDGGEQKR), and Y615. R621 serves as the catalytic Proton donor; for decarboxylase activity.

This sequence in the N-terminal section; belongs to the Fmt family. UDP-L-Ara4N formyltransferase subfamily. The protein in the C-terminal section; belongs to the NAD(P)-dependent epimerase/dehydratase family. UDP-glucuronic acid decarboxylase subfamily. As to quaternary structure, homohexamer, formed by a dimer of trimers.

The catalysed reaction is UDP-alpha-D-glucuronate + NAD(+) = UDP-beta-L-threo-pentopyranos-4-ulose + CO2 + NADH. It carries out the reaction UDP-4-amino-4-deoxy-beta-L-arabinose + (6R)-10-formyltetrahydrofolate = UDP-4-deoxy-4-formamido-beta-L-arabinose + (6S)-5,6,7,8-tetrahydrofolate + H(+). The protein operates within nucleotide-sugar biosynthesis; UDP-4-deoxy-4-formamido-beta-L-arabinose biosynthesis; UDP-4-deoxy-4-formamido-beta-L-arabinose from UDP-alpha-D-glucuronate: step 1/3. It participates in nucleotide-sugar biosynthesis; UDP-4-deoxy-4-formamido-beta-L-arabinose biosynthesis; UDP-4-deoxy-4-formamido-beta-L-arabinose from UDP-alpha-D-glucuronate: step 3/3. Its pathway is bacterial outer membrane biogenesis; lipopolysaccharide biosynthesis. Bifunctional enzyme that catalyzes the oxidative decarboxylation of UDP-glucuronic acid (UDP-GlcUA) to UDP-4-keto-arabinose (UDP-Ara4O) and the addition of a formyl group to UDP-4-amino-4-deoxy-L-arabinose (UDP-L-Ara4N) to form UDP-L-4-formamido-arabinose (UDP-L-Ara4FN). The modified arabinose is attached to lipid A and is required for resistance to polymyxin and cationic antimicrobial peptides. This chain is Bifunctional polymyxin resistance protein ArnA, found in Pseudomonas fluorescens (strain SBW25).